The sequence spans 736 residues: Orphan sodium- and chloride-dependent neurotransmitter transporter NTT5 (736 aa).

Residues 1 to 138 lie on the Cytoplasmic side of the membrane; it reads MKTEAQPSTS…FAYLWLNSGG (138 aa). Helical transmembrane passes span 139–159, 177–197, and 199–219; these read CSFA…LLFL, IIAP…FILG, and YFNV…QFPV. Residues 220 to 263 are Extracellular-facing; the sequence is PWEKCPLTMNSSGFDPECERTTPSIYFWYQQALKASDRIEDGGS. Asn-229 carries N-linked (GlcNAc...) asparagine glycosylation. The next 4 helical transmembrane spans lie at 264-284, 290-310, 338-358, and 383-403; these read PVYS…AFMI, TGKV…GFFI, VWSL…GSVA, and LTLL…ATVI. The Extracellular portion of the chain corresponds to 404 to 495; that stretch reads THRCCERNAE…EAMSFLPPSV (92 aa). 5 helical membrane-spanning segments follow: residues 496–516, 534–554, 568–588, 609–629, and 659–679; these read FWSF…AIGI, HTKL…LFFT, YWIV…VSWA, IFGW…FVTM, and ALLL…AYFV. At 680 to 736 the chain is on the cytoplasmic side; that stretch reads YCRIHRIPFRPKSGDGPMTASTSLPLSHQLTPSKEVQKEEILQVDETKYPSTCNVTS.

This sequence belongs to the sodium:neurotransmitter symporter (SNF) (TC 2.A.22) family. SLC6A16 subfamily. Highly expressed in peripheral tissues, particularly in testis, pancreas, and prostate.

The protein localises to the membrane. The chain is Orphan sodium- and chloride-dependent neurotransmitter transporter NTT5 (SLC6A16) from Homo sapiens (Human).